Consider the following 1009-residue polypeptide: DNA polymerase catalytic subunit (1009 aa).

It belongs to the DNA polymerase type-B family.

The protein resides in the host nucleus. It carries out the reaction DNA(n) + a 2'-deoxyribonucleoside 5'-triphosphate = DNA(n+1) + diphosphate. The chain is DNA polymerase catalytic subunit (9) from Saimiri sciureus (Common squirrel monkey).